The primary structure comprises 201 residues: Probable chemoreceptor glutamine deamidase CheD 1 (201 aa).

This sequence belongs to the CheD family.

The catalysed reaction is L-glutaminyl-[protein] + H2O = L-glutamyl-[protein] + NH4(+). Its function is as follows. Probably deamidates glutamine residues to glutamate on methyl-accepting chemotaxis receptors (MCPs), playing an important role in chemotaxis. This Dechloromonas aromatica (strain RCB) protein is Probable chemoreceptor glutamine deamidase CheD 1.